Reading from the N-terminus, the 134-residue chain is Urease subunit beta (134 aa).

The protein belongs to the urease beta subunit family. In terms of assembly, heterotrimer of UreA (gamma), UreB (beta) and UreC (alpha) subunits. Three heterotrimers associate to form the active enzyme.

It localises to the cytoplasm. It carries out the reaction urea + 2 H2O + H(+) = hydrogencarbonate + 2 NH4(+). It participates in nitrogen metabolism; urea degradation; CO(2) and NH(3) from urea (urease route): step 1/1. This is Urease subunit beta from Staphylococcus saprophyticus subsp. saprophyticus (strain ATCC 15305 / DSM 20229 / NCIMB 8711 / NCTC 7292 / S-41).